Reading from the N-terminus, the 531-residue chain is T-complex protein 1 subunit zeta (531 aa).

Ala2 carries the N-acetylalanine modification. Lys5 carries the N6-acetyllysine modification. An ADP-binding site is contributed by Gly39. Residue Gly39 coordinates ATP. Residue Asp90 coordinates Mg(2+). Gly91, Thr92, Thr93, Ser94, Thr158, and Lys159 together coordinate ADP. The ATP site is built by Gly91, Thr92, and Thr93. Lys199 carries the N6-acetyllysine modification. The residue at position 205 (Ser205) is a Phosphoserine. Lys251 participates in a covalent cross-link: Glycyl lysine isopeptide (Lys-Gly) (interchain with G-Cter in SUMO2). Residues Lys287, Lys365, Lys377, and Lys388 each carry the N6-acetyllysine modification. Position 411 (Ala411) interacts with ADP. Ala411, Gly412, Asp496, and Lys501 together coordinate ATP. Asp496 contributes to the ADP binding site.

This sequence belongs to the TCP-1 chaperonin family. As to quaternary structure, component of the chaperonin-containing T-complex (TRiC), a hexadecamer composed of two identical back-to-back stacked rings enclosing a protein folding chamber. Each ring is made up of eight different subunits: TCP1/CCT1, CCT2, CCT3, CCT4, CCT5, CCT6A/CCT6, CCT7, CCT8. Interacts with PACRG.

It localises to the cytoplasm. The enzyme catalyses ATP + H2O = ADP + phosphate + H(+). In terms of biological role, component of the chaperonin-containing T-complex (TRiC), a molecular chaperone complex that assists the folding of actin, tubulin and other proteins upon ATP hydrolysis. The TRiC complex mediates the folding of WRAP53/TCAB1, thereby regulating telomere maintenance. The sequence is that of T-complex protein 1 subunit zeta (CCT6A) from Bos taurus (Bovine).